The primary structure comprises 502 residues: Probable malate:quinone oxidoreductase 1 (502 aa).

It belongs to the MQO family. FAD is required as a cofactor.

The catalysed reaction is (S)-malate + a quinone = a quinol + oxaloacetate. Its pathway is carbohydrate metabolism; tricarboxylic acid cycle; oxaloacetate from (S)-malate (quinone route): step 1/1. This Pseudomonas putida (strain ATCC 47054 / DSM 6125 / CFBP 8728 / NCIMB 11950 / KT2440) protein is Probable malate:quinone oxidoreductase 1.